We begin with the raw amino-acid sequence, 382 residues long: Lipid-A-disaccharide synthase (382 aa).

Belongs to the LpxB family.

The enzyme catalyses 2-N,3-O-bis[(3R)-3-hydroxytetradecanoyl]-alpha-D-glucosaminyl 1-phosphate + UDP-2-N,3-O-bis[(3R)-3-hydroxytetradecanoyl]-alpha-D-glucosamine = lipid A disaccharide (E. coli) + UDP + H(+). The catalysed reaction is a lipid X + a UDP-2-N,3-O-bis[(3R)-3-hydroxyacyl]-alpha-D-glucosamine = a lipid A disaccharide + UDP + H(+). It functions in the pathway glycolipid biosynthesis; lipid IV(A) biosynthesis; lipid IV(A) from (3R)-3-hydroxytetradecanoyl-[acyl-carrier-protein] and UDP-N-acetyl-alpha-D-glucosamine: step 5/6. Functionally, condensation of UDP-2,3-diacylglucosamine and 2,3-diacylglucosamine-1-phosphate to form lipid A disaccharide, a precursor of lipid A, a phosphorylated glycolipid that anchors the lipopolysaccharide to the outer membrane of the cell. In Escherichia coli (strain ATCC 8739 / DSM 1576 / NBRC 3972 / NCIMB 8545 / WDCM 00012 / Crooks), this protein is Lipid-A-disaccharide synthase.